The primary structure comprises 655 residues: tRNA 5-methylaminomethyl-2-thiouridine biosynthesis bifunctional protein MnmC (655 aa).

Residues 1-236 (MTDPLVPAVL…KRAMLVGRFA (236 aa)) are tRNA (mnm(5)s(2)U34)-methyltransferase. The segment at 260–655 (IGTGLAGCAA…LRALRQGTAS (396 aa)) is FAD-dependent cmnm(5)s(2)U34 oxidoreductase.

The protein in the N-terminal section; belongs to the methyltransferase superfamily. tRNA (mnm(5)s(2)U34)-methyltransferase family. This sequence in the C-terminal section; belongs to the DAO family. FAD is required as a cofactor.

It localises to the cytoplasm. The catalysed reaction is 5-aminomethyl-2-thiouridine(34) in tRNA + S-adenosyl-L-methionine = 5-methylaminomethyl-2-thiouridine(34) in tRNA + S-adenosyl-L-homocysteine + H(+). In terms of biological role, catalyzes the last two steps in the biosynthesis of 5-methylaminomethyl-2-thiouridine (mnm(5)s(2)U) at the wobble position (U34) in tRNA. Catalyzes the FAD-dependent demodification of cmnm(5)s(2)U34 to nm(5)s(2)U34, followed by the transfer of a methyl group from S-adenosyl-L-methionine to nm(5)s(2)U34, to form mnm(5)s(2)U34. In Paraburkholderia phymatum (strain DSM 17167 / CIP 108236 / LMG 21445 / STM815) (Burkholderia phymatum), this protein is tRNA 5-methylaminomethyl-2-thiouridine biosynthesis bifunctional protein MnmC.